A 193-amino-acid chain; its full sequence is 3-isopropylmalate dehydratase small subunit (193 aa).

The protein belongs to the LeuD family. LeuD type 1 subfamily. As to quaternary structure, heterodimer of LeuC and LeuD.

It catalyses the reaction (2R,3S)-3-isopropylmalate = (2S)-2-isopropylmalate. Its pathway is amino-acid biosynthesis; L-leucine biosynthesis; L-leucine from 3-methyl-2-oxobutanoate: step 2/4. Functionally, catalyzes the isomerization between 2-isopropylmalate and 3-isopropylmalate, via the formation of 2-isopropylmaleate. This chain is 3-isopropylmalate dehydratase small subunit, found in Bacillus cereus (strain 03BB102).